The primary structure comprises 275 residues: Large ribosomal subunit protein uL2c (275 aa).

The segment at 219–255 (TVRGSVMNPCDHPHGGGEGRAPIGRTRPLTPWGKPAL) is disordered.

Belongs to the universal ribosomal protein uL2 family. As to quaternary structure, part of the 50S ribosomal subunit.

It is found in the plastid. The protein localises to the chloroplast. The sequence is that of Large ribosomal subunit protein uL2c (rpl2) from Trieres chinensis (Marine centric diatom).